Reading from the N-terminus, the 1002-residue chain is Chitin synthase II (1002 aa).

Disordered stretches follow at residues 1 to 165 (MDRP…GRTS) and 178 to 209 (LDGS…SGSQ). Residues 63-78 (SYQPSVVSSHSRSASV) are compositionally biased toward low complexity. N-linked (GlcNAc...) asparagine glycosylation is present at N123. An N-linked (GlcNAc...) asparagine glycan is attached at N336. 8 helical membrane-spanning segments follow: residues 627–647 (WLNG…QILA), 669–689 (LLFT…VAGG), 704–724 (SVIF…QFIL), 740–760 (SMII…YIVV), 780–800 (LIVS…LYLE), 808–828 (SLQY…YAFC), 906–926 (YMVV…SEIY), and 940–960 (ILWA…TFAI).

The protein belongs to the chitin synthase family. Class II subfamily. As to expression, expressed in hyphal bodies.

The protein resides in the cell membrane. The enzyme catalyses [(1-&gt;4)-N-acetyl-beta-D-glucosaminyl](n) + UDP-N-acetyl-alpha-D-glucosamine = [(1-&gt;4)-N-acetyl-beta-D-glucosaminyl](n+1) + UDP + H(+). Functionally, polymerizes chitin, a structural polymer of the cell wall and septum, by transferring the sugar moiety of UDP-GlcNAc to the non-reducing end of the growing chitin polymer. Contributes to the production of conidia and the ability of fungal conidia to germinate. Involved in fungal stress tolerances. The sequence is that of Chitin synthase II from Metarhizium acridum (strain CQMa 102).